The primary structure comprises 346 residues: NADH-ubiquinone oxidoreductase chain 2 (346 aa).

The next 11 helical transmembrane spans lie at 1–21, 25–45, 60–80, 95–115, 124–144, 149–169, 178–195, 200–219, 242–262, 274–294, and 326–346; these read MNPH…TITI, HWVL…PLIS, FLTQ…NAWA, CLLL…HFWF, LMTA…LLLM, LNPA…GWMG, ILAF…IILV, LALL…FMAL, ATLM…GFMP, EMTP…FFYL, and AILA…HAIV.

It belongs to the complex I subunit 2 family.

It is found in the mitochondrion inner membrane. The enzyme catalyses a ubiquinone + NADH + 5 H(+)(in) = a ubiquinol + NAD(+) + 4 H(+)(out). Core subunit of the mitochondrial membrane respiratory chain NADH dehydrogenase (Complex I) that is believed to belong to the minimal assembly required for catalysis. Complex I functions in the transfer of electrons from NADH to the respiratory chain. The immediate electron acceptor for the enzyme is believed to be ubiquinone. This chain is NADH-ubiquinone oxidoreductase chain 2 (MT-ND2), found in Anas acuta (Northern pintail).